Here is a 505-residue protein sequence, read N- to C-terminus: Probable bifunctional methylthioribulose-1-phosphate dehydratase/enolase-phosphatase E1 (505 aa).

The tract at residues 1 to 237 (MGLDKDGISN…ALKLHQLGLD (237 aa)) is methylthioribulose-1-phosphate dehydratase. Position 109 (Cys109) interacts with substrate. Zn(2+) is bound by residues His127 and His129. Glu152 (proton donor/acceptor; for methylthioribulose-1-phosphate dehydratase activity) is an active-site residue. His202 provides a ligand contact to Zn(2+). The interval 266-505 (FVLDIEGTTT…FRTAKSLLEL (240 aa)) is enolase-phosphatase E1. 2 residues coordinate Mg(2+): Asp269 and Glu271. Substrate contacts are provided by residues 404–405 (SS) and Lys438. Asp464 is a binding site for Mg(2+).

The protein in the N-terminal section; belongs to the aldolase class II family. MtnB subfamily. It in the C-terminal section; belongs to the HAD-like hydrolase superfamily. MasA/MtnC family. The cofactor is Zn(2+). It depends on Mg(2+) as a cofactor.

The enzyme catalyses 5-(methylsulfanyl)-D-ribulose 1-phosphate = 5-methylsulfanyl-2,3-dioxopentyl phosphate + H2O. It carries out the reaction 5-methylsulfanyl-2,3-dioxopentyl phosphate + H2O = 1,2-dihydroxy-5-(methylsulfanyl)pent-1-en-3-one + phosphate. It participates in amino-acid biosynthesis; L-methionine biosynthesis via salvage pathway; L-methionine from S-methyl-5-thio-alpha-D-ribose 1-phosphate: step 2/6. It functions in the pathway amino-acid biosynthesis; L-methionine biosynthesis via salvage pathway; L-methionine from S-methyl-5-thio-alpha-D-ribose 1-phosphate: step 3/6. Its pathway is amino-acid biosynthesis; L-methionine biosynthesis via salvage pathway; L-methionine from S-methyl-5-thio-alpha-D-ribose 1-phosphate: step 4/6. The polypeptide is Probable bifunctional methylthioribulose-1-phosphate dehydratase/enolase-phosphatase E1 (Physcomitrium patens (Spreading-leaved earth moss)).